The sequence spans 234 residues: tRNA (guanine-N(1)-)-methyltransferase (234 aa).

Gly-113 contributes to the S-adenosyl-L-methionine binding site.

It belongs to the RNA methyltransferase TrmD family. Homodimer.

It localises to the cytoplasm. The enzyme catalyses guanosine(37) in tRNA + S-adenosyl-L-methionine = N(1)-methylguanosine(37) in tRNA + S-adenosyl-L-homocysteine + H(+). Functionally, specifically methylates guanosine-37 in various tRNAs. The chain is tRNA (guanine-N(1)-)-methyltransferase from Gluconobacter oxydans (strain 621H) (Gluconobacter suboxydans).